The following is a 677-amino-acid chain: DNA ligase (677 aa).

NAD(+) contacts are provided by residues 35 to 39 (DAVYD), 84 to 85 (SL), and E115. K117 (N6-AMP-lysine intermediate) is an active-site residue. 4 residues coordinate NAD(+): R138, E177, K296, and K320. C414, C417, C432, and C437 together coordinate Zn(2+). A BRCT domain is found at 599 to 677 (NGILKLNGKT…ETQLLEILEE (79 aa)).

Belongs to the NAD-dependent DNA ligase family. LigA subfamily. Requires Mg(2+) as cofactor. Mn(2+) serves as cofactor.

It catalyses the reaction NAD(+) + (deoxyribonucleotide)n-3'-hydroxyl + 5'-phospho-(deoxyribonucleotide)m = (deoxyribonucleotide)n+m + AMP + beta-nicotinamide D-nucleotide.. Functionally, DNA ligase that catalyzes the formation of phosphodiester linkages between 5'-phosphoryl and 3'-hydroxyl groups in double-stranded DNA using NAD as a coenzyme and as the energy source for the reaction. It is essential for DNA replication and repair of damaged DNA. This chain is DNA ligase, found in Nostoc sp. (strain PCC 7120 / SAG 25.82 / UTEX 2576).